Here is an 87-residue protein sequence, read N- to C-terminus: U3-theraphotoxin-Hhn1p (87 aa).

Residues 1 to 24 (MVNMKASMFLTFAGLVLLFVVCYA) form the signal peptide. A propeptide spanning residues 25–52 (SESEEKEFPKEMLSSIFAVDNDFKQEER) is cleaved from the precursor. Disulfide bonds link Cys54/Cys67, Cys61/Cys72, and Cys66/Cys79.

Belongs to the neurotoxin 10 (Hwtx-1) family. 51 (Hntx-8) subfamily. Hntx-8 sub-subfamily. As to expression, expressed by the venom gland.

It is found in the secreted. Functionally, ion channel inhibitor. In Cyriopagopus hainanus (Chinese bird spider), this protein is U3-theraphotoxin-Hhn1p.